Reading from the N-terminus, the 684-residue chain is Phenoloxidase 2 (684 aa).

Positions methionine 1–arginine 51 are cleaved as a propeptide — removed by PPAF1. Residues asparagine 81 and asparagine 91 are each glycosylated (N-linked (GlcNAc...) asparagine). Positions 209, 213, and 238 each coordinate Cu cation. A glycan (N-linked (GlcNAc...) asparagine) is linked at asparagine 330. The Proton acceptor role is filled by glutamate 350. Cu cation-binding residues include histidine 365, histidine 369, and histidine 405. 4 N-linked (GlcNAc...) asparagine glycosylation sites follow: asparagine 416, asparagine 487, asparagine 491, and asparagine 546. Cystine bridges form between cysteine 581–cysteine 623 and cysteine 583–cysteine 630.

This sequence belongs to the tyrosinase family. As to quaternary structure, dimer. Might form a homodimer or a heterodimer with PPO1. Might interact with PPAF2 (via CLIP domain); the interaction might be required for PPO2 activity. Cu(2+) serves as cofactor. Precursor cleaved by PPAF1. Hemocytes.

The protein resides in the secreted. Functionally, this is a copper-containing oxidase that functions in the formation of pigments such as melanins and other polyphenolic compounds. Catalyzes the oxidation of o-diphenols (N-acetyldopamine, 4-methylcatechol and dopamine). Cannot oxidize monophenols and p-phenols (L-tyrosine, tyramine, gentisic acid and hydroquinone). Binds to the surface of hemocytes and is involved in hemocyte melanization. Activation of the enzyme in response to bacterial lipopolysaccharides (LPS) suggests it may play a role in innate immunity. This is Phenoloxidase 2 from Holotrichia diomphalia (Korean black chafer).